Reading from the N-terminus, the 188-residue chain is Peptide deformylase (188 aa).

Fe cation contacts are provided by Cys109 and His152. Glu153 is an active-site residue. His156 serves as a coordination point for Fe cation.

This sequence belongs to the polypeptide deformylase family. Fe(2+) is required as a cofactor.

The enzyme catalyses N-terminal N-formyl-L-methionyl-[peptide] + H2O = N-terminal L-methionyl-[peptide] + formate. In terms of biological role, removes the formyl group from the N-terminal Met of newly synthesized proteins. Requires at least a dipeptide for an efficient rate of reaction. N-terminal L-methionine is a prerequisite for activity but the enzyme has broad specificity at other positions. In Chloroflexus aggregans (strain MD-66 / DSM 9485), this protein is Peptide deformylase.